A 107-amino-acid chain; its full sequence is Quaternary ammonium compound-resistance protein QacC (107 aa).

Residues 1–2 lie on the Cytoplasmic side of the membrane; the sequence is MP. Residues 3-20 traverse the membrane as a helical segment; it reads YIYLIIAISTEVIGSAFL. Topologically, residues 21–29 are extracellular; the sequence is KSSEGFSKF. The helical transmembrane segment at 30-47 threads the bilayer; that stretch reads IPSLGTIISFGICFYFLS. At 48–56 the chain is on the cytoplasmic side; it reads KTMQHLPLN. A helical membrane pass occupies residues 57-75; sequence ITYATWAGLGLVLTTVVSI. Over 76–85 the chain is Extracellular; it reads IIFKEQINLI. Residues 86–103 traverse the membrane as a helical segment; the sequence is TIVSIVLIIVGVVSLNIF. Residues 104–107 lie on the Cytoplasmic side of the membrane; it reads GTSH.

Belongs to the drug/metabolite transporter (DMT) superfamily. Small multidrug resistance (SMR) (TC 2.A.7.1) family.

The protein resides in the cell membrane. Ethidium export is inhibited by N-ethylmaleimide (NEM). Its function is as follows. Multidrug exporter. Is implicated for the resistance to bacteriocidal quaternary ammonium compounds and ethidium bromide. This Staphylococcus aureus protein is Quaternary ammonium compound-resistance protein QacC.